A 152-amino-acid chain; its full sequence is Large ribosomal subunit protein uL13 (152 aa).

Residues 129–152 (EHPHEAQSPEVLDVKSMNKKNTRS) form a disordered region.

It belongs to the universal ribosomal protein uL13 family. As to quaternary structure, part of the 50S ribosomal subunit.

Functionally, this protein is one of the early assembly proteins of the 50S ribosomal subunit, although it is not seen to bind rRNA by itself. It is important during the early stages of 50S assembly. The polypeptide is Large ribosomal subunit protein uL13 (Ruegeria sp. (strain TM1040) (Silicibacter sp.)).